The sequence spans 89 residues: Small ribosomal subunit protein uS17 (89 aa).

It belongs to the universal ribosomal protein uS17 family. As to quaternary structure, part of the 30S ribosomal subunit.

Functionally, one of the primary rRNA binding proteins, it binds specifically to the 5'-end of 16S ribosomal RNA. This Polaromonas naphthalenivorans (strain CJ2) protein is Small ribosomal subunit protein uS17.